The following is a 345-amino-acid chain: Phosphoribosylformylglycinamidine cyclo-ligase (345 aa).

Belongs to the AIR synthase family.

Its subcellular location is the cytoplasm. The catalysed reaction is 2-formamido-N(1)-(5-O-phospho-beta-D-ribosyl)acetamidine + ATP = 5-amino-1-(5-phospho-beta-D-ribosyl)imidazole + ADP + phosphate + H(+). It functions in the pathway purine metabolism; IMP biosynthesis via de novo pathway; 5-amino-1-(5-phospho-D-ribosyl)imidazole from N(2)-formyl-N(1)-(5-phospho-D-ribosyl)glycinamide: step 2/2. The sequence is that of Phosphoribosylformylglycinamidine cyclo-ligase from Tolumonas auensis (strain DSM 9187 / NBRC 110442 / TA 4).